The sequence spans 628 residues: tRNA uridine 5-carboxymethylaminomethyl modification enzyme MnmG (628 aa).

FAD is bound by residues 14 to 19 (GAGHAG), valine 126, and serine 181. 273–287 (GPRYCPSIEDKVVRF) is an NAD(+) binding site. Glutamine 370 contributes to the FAD binding site.

The protein belongs to the MnmG family. In terms of assembly, homodimer. Heterotetramer of two MnmE and two MnmG subunits. Requires FAD as cofactor.

The protein resides in the cytoplasm. Its function is as follows. NAD-binding protein involved in the addition of a carboxymethylaminomethyl (cmnm) group at the wobble position (U34) of certain tRNAs, forming tRNA-cmnm(5)s(2)U34. This chain is tRNA uridine 5-carboxymethylaminomethyl modification enzyme MnmG, found in Bacillus licheniformis (strain ATCC 14580 / DSM 13 / JCM 2505 / CCUG 7422 / NBRC 12200 / NCIMB 9375 / NCTC 10341 / NRRL NRS-1264 / Gibson 46).